The following is a 301-amino-acid chain: J domain-containing protein 1 (301 aa).

One can recognise a J domain in the interval Thr58–Arg150. Residues Trp208 to Ala228 traverse the membrane as a helical segment.

The protein belongs to the DnaJ family.

It localises to the mitochondrion membrane. Probable chaperone. The polypeptide is J domain-containing protein 1 (JID1) (Saccharomyces cerevisiae (strain ATCC 204508 / S288c) (Baker's yeast)).